The following is a 319-amino-acid chain: tRNA U34 carboxymethyltransferase (319 aa).

Residues K88, W102, K107, G126, 176–177 (LE), M192, Y196, and R311 contribute to the carboxy-S-adenosyl-L-methionine site.

The protein belongs to the class I-like SAM-binding methyltransferase superfamily. CmoB family. Homotetramer.

The enzyme catalyses carboxy-S-adenosyl-L-methionine + 5-hydroxyuridine(34) in tRNA = 5-carboxymethoxyuridine(34) in tRNA + S-adenosyl-L-homocysteine + H(+). In terms of biological role, catalyzes carboxymethyl transfer from carboxy-S-adenosyl-L-methionine (Cx-SAM) to 5-hydroxyuridine (ho5U) to form 5-carboxymethoxyuridine (cmo5U) at position 34 in tRNAs. This Pseudomonas syringae pv. syringae (strain B728a) protein is tRNA U34 carboxymethyltransferase.